Consider the following 200-residue polypeptide: Large ribosomal subunit protein uL4 (200 aa).

The tract at residues 43–71 (RAQKTRAEVSGSGKKPWRQKGTGRARSGD) is disordered.

It belongs to the universal ribosomal protein uL4 family. As to quaternary structure, part of the 50S ribosomal subunit.

In terms of biological role, one of the primary rRNA binding proteins, this protein initially binds near the 5'-end of the 23S rRNA. It is important during the early stages of 50S assembly. It makes multiple contacts with different domains of the 23S rRNA in the assembled 50S subunit and ribosome. Its function is as follows. Forms part of the polypeptide exit tunnel. The polypeptide is Large ribosomal subunit protein uL4 (Mannheimia succiniciproducens (strain KCTC 0769BP / MBEL55E)).